Here is a 196-residue protein sequence, read N- to C-terminus: Probable GTP-binding protein EngB (196 aa).

The 174-residue stretch at 22 to 195 (KLPEVALAGR…WNWIESITKV (174 aa)) folds into the EngB-type G domain. Residues 30-37 (GRSNVGKS), 57-61 (GKTQT), 75-78 (DVPG), 142-145 (TKID), and 174-176 (FSA) each bind GTP. Mg(2+)-binding residues include Ser37 and Thr59.

It belongs to the TRAFAC class TrmE-Era-EngA-EngB-Septin-like GTPase superfamily. EngB GTPase family. Requires Mg(2+) as cofactor.

In terms of biological role, necessary for normal cell division and for the maintenance of normal septation. This Ligilactobacillus salivarius (strain UCC118) (Lactobacillus salivarius) protein is Probable GTP-binding protein EngB.